Reading from the N-terminus, the 557-residue chain is Formate--tetrahydrofolate ligase (557 aa).

Residue 67-74 (TPAGEGKT) coordinates ATP.

This sequence belongs to the formate--tetrahydrofolate ligase family.

The enzyme catalyses (6S)-5,6,7,8-tetrahydrofolate + formate + ATP = (6R)-10-formyltetrahydrofolate + ADP + phosphate. The protein operates within one-carbon metabolism; tetrahydrofolate interconversion. In Cereibacter sphaeroides (strain KD131 / KCTC 12085) (Rhodobacter sphaeroides), this protein is Formate--tetrahydrofolate ligase.